The sequence spans 1864 residues: MYMLTFEPGLCVAGIIRQVRSNPFMHVVQAYARTTETYREDIEMTKSMLKLKADEPLLVMSIVAAAMDFQTMVMAPIEMEASEFLYGFYAERMSYIVTNRGMSELHEYIQLQCQRHLLVKVEIDGQYLVQEHEYEAQGFNIKRVKELITDVATWVPKKVKGMIGWSVDAVLDSFQEYFYKVITERIPMAMKVCSWVATVWDQIKTWIEDAMTAMSSFLQGCNELLTWGLATLAACCALNVLERILIFMEFLDESIDIAGIFLRTGVVAAACYHFSSTAKGFTEMMSVLSVATTAVAAVVCANYFGGSKTKKVNAQGNPVDLLERIAAGLSSISQDSLVSLGKSCSAINSIATSYGHLRNFAGRVLTMLRDFAWKILGLETRFLADAALVFGEDVDGWLQRISALREAYVSKAYSSQDEVFEMNVLLERGYKMRHLMATGSRVSPAIGNMLMQGLADLERLHRNAAVQGVKGVRKIPFTVFAHGNSRCGKSLLIGKLISDFQEHKGLGEDTVYSRNTTETHWSGYRRQPIVVIDDFAAVESDISAEAQLINLVSSTPYSVVMAAIEEKGMTFDSQFIFASTNFLEVSPNGKIRCDDAFRNRRHVLIDVKLKPEVEYQSDDFTANQSYNILEHSHGRYNVVATFDNYEELLAYCLTKHEQHEAEQEANLAKLRRTNKFESHFKKFEQVLQLSTYFSSSIERIKREALATTDGADDYHLLYVVPRNGSYLHVAANKDFQIQQWYGPVEEVAEEDILRASERMLLGAYEFLLLSTELNVVVKNHLPELICTDNYDHNLEFCGVVGDPVYHQQLLKNIRALKPWHRAVLFGIGTLMGAKNPTPWYKRMWEGIKDVLYKAYSTEISQWPVPLKITCGIVLVGIVGAGFWKTVSVLTNAGNGAGLVGAAVNSFSVVSTAEAQSRKPNRFEVQQYRYKNVPLTRRSWGNAQMSLDQSTVSILNKCHAKFIIASQHAQIVLVPGRRFIGYSHFFCNLKHPLMVQIETADRTYFHRYQPENMEYIEDSELCVYHSSCLEDISHSCWDLFCWDPDKELPKKFSADFVSCKYNTWTKSVEPTWANVDAEVIKEDFTICDGEYRNTVSTSIRYEAPTVMSDCGSMIITNVGGKTKIVGIHVAGRDNKIGMASLLPPLLPCAQAQGAEKYFNFYPIEYDAAEGIARVGELKPKLYIPLPKKTSLVKTPEEWHLGTPCDKVPSILVKGDPRLADTVHADYDPCLSGLTKYSTPMSPLDSVLLGETCQEILDEWFDCLPEGFELGEVTINEALNGVDGVDYMDRIPLATSEGFPHVMSREQGEKGKQRFVQGDGHIVSLIPGTSVHEAYETLSRTIATEVPTLVGIECPKDEKLPFRKVFTKPKTRNFTILPMEYNILVRQYFLNFVRFIMKKRDVLPCQVGINPYSMEWSIVASRLKSQGNDILCCDYSSFDGLLSKQIMEMMADMINRFCGGGTLICAKRKNLLMACCSRLAISRDSVWRIECGIPSGFPLTVICNSIFNEILVRYHYKLLLQEHNAPNMYVQSFKNLISMVTYGDDNLISVNAVVKPYFDGTKLKQAMARNGIIITDGKDKTSATLEFRRLEDCDFLKRGFLKRSSVLWDAPEEKASLWAQLHYVNVNNCEMQVAYMTNLVNVLRELYMHDPTEMVEFRRLALKSIPWLNTTDLPTLYQVKEFYAEQRLRNIPDHNDSLDMLTSVDLLGPAILGEGVPQEALVLSELLEVRDLRYHTVPDNDNGKEVWILFNTMYPQKLLPSNCHSFTWNCGQGRGGLPTQHWLATNVTRTDSKLNKLIRTAVAANKKIVLATKDNILPINVIAVLLAARNKVMPSLATNALLTYVIGAAKKLNFLTSECQFAFFNV.

The SF3 helicase domain maps to 457 to 622; that stretch reads LERLHRNAAV…VEYQSDDFTA (166 aa). ATP is bound at residue 483-490; sequence GNSRCGKS. The chain crosses the membrane as a helical span at residues 892 to 912; sequence AGNGAGLVGAAVNSFSVVSTA. S916 is subject to O-(5'-phospho-RNA)-serine. One can recognise a Peptidase C3 domain in the interval 943-1146; it reads QMSLDQSTVS…MASLLPPLLP (204 aa). Active-site for picornain 3C-like protease activity residues include H983, E1019, and C1109. Residues 1426–1556 form the RdRp catalytic domain; it reads NDILCCDYSS…SVNAVVKPYF (131 aa).

Specific enzymatic cleavages by picornain 3C-like protease in vivo yield mature proteins. Picornain 3C-like protease is autocatalytically processed. Post-translationally, uridylylated by the polymerase and is covalently linked to the 5'-end of genomic RNA. This uridylylated form acts as a nucleotide-peptide primer for the polymerase.

The protein localises to the host membrane. It localises to the host cytoplasm. The protein resides in the host perinuclear region. Its subcellular location is the host endoplasmic reticulum. The catalysed reaction is RNA(n) + a ribonucleoside 5'-triphosphate = RNA(n+1) + diphosphate. Thiol protease that cleaves the RNA1 and RNA2 polyproteins. In terms of biological role, plays a role in RNA replication. It is covalently linked to the 5'terminus of both viral single-stranded RNA1 and RNA2 molecules. Functionally, down-regulates the RNA1 polyprotein processing and enhances trans-cleavage of RNA2 polyproteins. The protease cofactor and the putative helicase seem to target the replication complexes to ER membranes. Their physical association causes the membrane rearrangement of host ER that may result in formation of the small membranous vesicles that are the site of viral RNA synthesis. Its function is as follows. The protease cofactor and the putative helicase seem to target the replication complexes to ER membranes. Their physical association causes the membrane rearrangement of host ER that may result in formation of the small membranous vesicles that are the site of viral RNA synthesis. Replicates the viral genome. This is RNA1 polyprotein from Trifolium pratense (Red clover).